Reading from the N-terminus, the 413-residue chain is Histidine--tRNA ligase (413 aa).

Belongs to the class-II aminoacyl-tRNA synthetase family.

The protein resides in the cytoplasm. It carries out the reaction tRNA(His) + L-histidine + ATP = L-histidyl-tRNA(His) + AMP + diphosphate + H(+). The protein is Histidine--tRNA ligase of Methanosarcina acetivorans (strain ATCC 35395 / DSM 2834 / JCM 12185 / C2A).